A 103-amino-acid polypeptide reads, in one-letter code: Small ribosomal subunit protein uS10 (103 aa).

Belongs to the universal ribosomal protein uS10 family. Part of the 30S ribosomal subunit.

In terms of biological role, involved in the binding of tRNA to the ribosomes. The protein is Small ribosomal subunit protein uS10 of Rubrobacter xylanophilus (strain DSM 9941 / JCM 11954 / NBRC 16129 / PRD-1).